Reading from the N-terminus, the 471-residue chain is MAREMTILGSAVLTLLLAGYLAQQYLPLPTPKVIGIDLGTTYCSVGVFFPGTGKVKVIPDENGHISIPSMVSFTDNDVYVGYESVELADSNPQNTIYDAKRFIGKIFTAEELEAEIGRYPFKVLNKNGMVEFSVTSNETITVSPEYVGSRLLLKLKEMAEAYLGMPVANAVISVPAEFDLKQRNSTIEAANLAGLKILRVINEPTAAAMAYGLHKADVFHVLVIDLGGGTLDVSLLNKQGGMFLTRAMSGNNKLGGQDFNQRLLQYLYKQIYQTYGFVPSRKEEIHRLRQAVEMVKLNLTLHQSAQLSVLLTVEEQDRKEPHSSDTELPKDKLSSADDHRVNSGFGRGLSDKKSGESQVLFETEISRKLFDTLNEDLFQKILVPIQQVLKEGHLEKTEIDEVVLVGGSTRIPRIRQVIQEFFGKDPNTSVDPDLAVVTGVAIQAGIDGGSWPLQVSALEIPNKHLQKTNFN.

The first 22 residues, 1–22, serve as a signal peptide directing secretion; it reads MAREMTILGSAVLTLLLAGYLA. Over residues 315–341 the composition is skewed to basic and acidic residues; sequence EQDRKEPHSSDTELPKDKLSSADDHRV. The tract at residues 315 to 352 is disordered; sequence EQDRKEPHSSDTELPKDKLSSADDHRVNSGFGRGLSDK.

The protein belongs to the heat shock protein 70 family. In terms of assembly, binds UBQLN2. In terms of tissue distribution, constitutively expressed in all tissues.

The protein localises to the microsome. Its subcellular location is the endoplasmic reticulum. Functionally, has peptide-independent ATPase activity. In Homo sapiens (Human), this protein is Heat shock 70 kDa protein 13 (HSPA13).